The following is a 262-amino-acid chain: Lysine 5,6-aminomutase beta subunit (262 aa).

A B12-binding domain is found at 120-262 (KIVVVGASTG…VKTLNDRMNS (143 aa)). Adenosylcob(III)alamin-binding positions include 130-136 (TDAHTVG) and histidine 133. Lysine 144 is modified (N6-(pyridoxal phosphate)lysine). Adenosylcob(III)alamin is bound by residues 185-192 (LVSQTVTQ), 219-223 (LCGGP), and 239-244 (FGPGRF).

This sequence belongs to the KamE family. As to quaternary structure, heterotetramer of 2 alpha and 2 beta subunits. Requires adenosylcob(III)alamin as cofactor. It depends on pyridoxal 5'-phosphate as a cofactor.

It catalyses the reaction (3S)-3,6-diaminohexanoate = (3S,5S)-3,5-diaminohexanoate. The catalysed reaction is D-lysine = (2R,5S)-2,5-diaminohexanoate. It participates in amino-acid metabolism; lysine degradation. With respect to regulation, rapidly inactivated in the presence of D-lysine and to a lesser extent in the absence of adenosylcobalamin (Adocbl). Activity is stable in the presence of Adocbl when D-lysine is absent. Adocbl imparts thermal stability at 37 degrees Celsius. In terms of biological role, catalyzes the migration of the L-beta-lysine and D-lysine epsilon amino group to the delta carbon to produce 3,5-diaminohexanoate and 2,5-diaminohexanoate, respectively. In Acetoanaerobium sticklandii (strain ATCC 12662 / DSM 519 / JCM 1433 / CCUG 9281 / NCIMB 10654 / HF) (Clostridium sticklandii), this protein is Lysine 5,6-aminomutase beta subunit (kamE).